A 288-amino-acid polypeptide reads, in one-letter code: Hypersensitive-induced response protein-like protein 1 (288 aa).

Glycine 2 carries N-myristoyl glycine lipidation.

Its function is as follows. Positive regulator of hypersensitive response (HR)-like cell death. May be involved in potassium ion channel regulation. This chain is Hypersensitive-induced response protein-like protein 1, found in Oryza sativa subsp. japonica (Rice).